We begin with the raw amino-acid sequence, 469 residues long: 3-isopropylmalate dehydratase large subunit (469 aa).

[4Fe-4S] cluster is bound by residues cysteine 350, cysteine 410, and cysteine 413.

This sequence belongs to the aconitase/IPM isomerase family. LeuC type 1 subfamily. In terms of assembly, heterodimer of LeuC and LeuD. Requires [4Fe-4S] cluster as cofactor.

The catalysed reaction is (2R,3S)-3-isopropylmalate = (2S)-2-isopropylmalate. Its pathway is amino-acid biosynthesis; L-leucine biosynthesis; L-leucine from 3-methyl-2-oxobutanoate: step 2/4. Catalyzes the isomerization between 2-isopropylmalate and 3-isopropylmalate, via the formation of 2-isopropylmaleate. The chain is 3-isopropylmalate dehydratase large subunit from Agrobacterium fabrum (strain C58 / ATCC 33970) (Agrobacterium tumefaciens (strain C58)).